A 305-amino-acid chain; its full sequence is Undecaprenyl-diphosphatase (305 aa).

8 consecutive transmembrane segments (helical) span residues 18 to 38 (GVTE…PALV), 55 to 75 (YLAF…VFFW), 103 to 123 (WLIV…EQLF), 130 to 150 (PVPA…GEVL), 187 to 207 (GVLI…RSGI), 225 to 245 (FSFL…IPEL), 246 to 266 (FGPL…ASFV), and 284 to 304 (LTPF…WLAL).

The protein belongs to the UppP family.

It is found in the cell membrane. The catalysed reaction is di-trans,octa-cis-undecaprenyl diphosphate + H2O = di-trans,octa-cis-undecaprenyl phosphate + phosphate + H(+). Catalyzes the dephosphorylation of undecaprenyl diphosphate (UPP). Confers resistance to bacitracin. In Mycobacterium avium (strain 104), this protein is Undecaprenyl-diphosphatase.